A 61-amino-acid chain; its full sequence is UPF0391 membrane protein Ajs_0703 (61 aa).

The next 2 helical transmembrane spans lie at Ala-5–Ala-25 and Val-33–Ile-53.

This sequence belongs to the UPF0391 family.

The protein localises to the cell membrane. This chain is UPF0391 membrane protein Ajs_0703, found in Acidovorax sp. (strain JS42).